Reading from the N-terminus, the 140-residue chain is Large ribosomal subunit protein uL11 (140 aa).

Belongs to the universal ribosomal protein uL11 family. In terms of assembly, part of the ribosomal stalk of the 50S ribosomal subunit. Interacts with L10 and the large rRNA to form the base of the stalk. L10 forms an elongated spine to which L12 dimers bind in a sequential fashion forming a multimeric L10(L12)X complex. Post-translationally, one or more lysine residues are methylated.

Functionally, forms part of the ribosomal stalk which helps the ribosome interact with GTP-bound translation factors. The chain is Large ribosomal subunit protein uL11 from Solidesulfovibrio magneticus (strain ATCC 700980 / DSM 13731 / RS-1) (Desulfovibrio magneticus).